A 261-amino-acid chain; its full sequence is Carbonic anhydrase 1 (261 aa).

A2 carries the N-acetylalanine modification. The Alpha-carbonic anhydrase domain maps to 4-261; it reads PDWGYDDKNG…LKGRTVRASF (258 aa). Catalysis depends on H65, which acts as the Proton donor/acceptor. Zn(2+) contacts are provided by H95, H97, and H120. Residues T200 and 200–201 contribute to the substrate site; that span reads TH. The segment at 238-261 is disordered; that stretch reads NPVPIQRNNRPTQPLKGRTVRASF.

It belongs to the alpha-carbonic anhydrase family. It depends on Zn(2+) as a cofactor.

The protein resides in the cytoplasm. The enzyme catalyses hydrogencarbonate + H(+) = CO2 + H2O. The catalysed reaction is urea = cyanamide + H2O. Its activity is regulated as follows. Inhibited by acetazolamide. Catalyzes the reversible hydration of carbon dioxide. Can hydrate cyanamide to urea. This is Carbonic anhydrase 1 (CA1) from Macaca mulatta (Rhesus macaque).